Here is a 435-residue protein sequence, read N- to C-terminus: Monodehydroascorbate reductase 2 (435 aa).

FAD is bound by residues 14-17, E41, R48, K53, I96, and 147-148; these read GGVA and RE. NAD(+) is bound by residues 172–178, E196, R202, and G261; that span reads GGYIGLE. 174 to 178 is a binding site for NADP(+); that stretch reads YIGLE. NADP(+) contacts are provided by R202 and G261. D298 serves as a coordination point for FAD. 314 to 315 contacts NAD(+); sequence EH. 314-315 provides a ligand contact to NADP(+); sequence EH. Residue V316 coordinates FAD. An L-ascorbate-binding site is contributed by R320. FAD is bound at residue Y349. An NAD(+)-binding site is contributed by Y349. Y349 provides a ligand contact to NADP(+). R351 provides a ligand contact to L-ascorbate. S417 bears the Phosphoserine mark.

This sequence belongs to the FAD-dependent oxidoreductase family. FAD serves as cofactor.

The protein localises to the cytoplasm. The enzyme catalyses 2 monodehydro-L-ascorbate radical + NADH + H(+) = 2 L-ascorbate + NAD(+). Catalyzes the conversion of monodehydroascorbate to ascorbate, oxidizing NADH in the process. The polypeptide is Monodehydroascorbate reductase 2 (Arabidopsis thaliana (Mouse-ear cress)).